A 472-amino-acid polypeptide reads, in one-letter code: Transmembrane protein 8B (472 aa).

The span at 1–10 (MNMPQSLGTQ) shows a compositional bias: low complexity. Residues 1–24 (MNMPQSLGTQPLPPEPPSLGTPIE) form a disordered region. The Extracellular portion of the chain corresponds to 1–233 (MNMPQSLGTQ…ADALTYGFQL (233 aa)). N100 carries an N-linked (GlcNAc...) asparagine glycan. An EGF-like domain is found at 182–221 (FLSPCVDDCGPYGQCKLLRTHNYLYAACECKAGWRGWGCT). Disulfide bonds link C186/C196, C190/C209, and C211/C220. A helical membrane pass occupies residues 234 to 254 (LSTLLLCLSNLMFLPPVVLAI). Over 255-257 (RSR) the chain is Cytoplasmic. A helical transmembrane segment spans residues 258-277 (YVLEAAVYTFTMFFSTFYHA). The Extracellular segment spans residues 278-292 (CDQPGIVVFCIMDYD). Residues 293–313 (VLQFCDFLGSLMSVWVTVIAM) form a helical membrane-spanning segment. The Cytoplasmic segment spans residues 314–315 (AR). A helical transmembrane segment spans residues 316–336 (LQPVIKQVLYLLGAMLLSMAL). Residues 337–342 (QLDRHG) lie on the Extracellular side of the membrane. The helical transmembrane segment at 343–363 (LWNLLGPSLFALGILATAWTV) threads the bilayer. Residues 364 to 379 (RSVRRRHCYPPTWRRW) are Cytoplasmic-facing. Residues 380–400 (LFYLCPGSLIAGSAVLLYAFV) traverse the membrane as a helical segment. Topologically, residues 401-405 (ETRDN) are extracellular. Residues 406–426 (YFYIHSIWHMLIAGSVGFLLP) form a helical membrane-spanning segment. Topologically, residues 427–472 (PRAKTDRRVPSGARARGCGYQLCINEQEELGLVGPGGTTVSSICVS) are cytoplasmic.

The protein belongs to the TMEM8 family. In terms of assembly, may interact with EZR. In terms of processing, N-glycosylated.

Its subcellular location is the cell membrane. It localises to the cytoplasm. It is found in the nucleus. The protein localises to the mitochondrion. The protein resides in the endoplasmic reticulum. In terms of biological role, may function as a regulator of the EGFR pathway. Probable tumor suppressor which may function in cell growth, proliferation and adhesion. This chain is Transmembrane protein 8B (Tmem8b), found in Mus musculus (Mouse).